A 621-amino-acid chain; its full sequence is Ubiquitin carboxyl-terminal hydrolase MINDY-2 (621 aa).

Disordered regions lie at residues 1 to 106 (MESS…RGQY) and 119 to 179 (VGHE…LESF). Ser-94 carries the phosphoserine modification. The span at 145-163 (AAGSEEPSSAGGLSSSCSD) shows a compositional bias: low complexity. The Nucleophile role is filled by Cys-266. His-448 functions as the Proton acceptor in the catalytic mechanism. The ubiquitin-binding domain (UBD) stretch occupies residues 507 to 559 (GQQDQIDQDYLMALSLQQEQQSQEINWEQIPEGISDLELAKKLQEEEDRRASQ). Residues 556 to 621 (RASQYYQEQE…EKEKNSCVIL (66 aa)) form a disordered region. Residues 558–591 (SQYYQEQEQAAAAAAAASTQAQQGQPAQASPSSG) show a composition bias toward low complexity. The span at 597–621 (SERKRKEPREKDKEKEKEKNSCVIL) shows a compositional bias: basic and acidic residues.

Belongs to the MINDY deubiquitinase family. FAM63 subfamily.

The enzyme catalyses Thiol-dependent hydrolysis of ester, thioester, amide, peptide and isopeptide bonds formed by the C-terminal Gly of ubiquitin (a 76-residue protein attached to proteins as an intracellular targeting signal).. In terms of biological role, hydrolase that can remove 'Lys-48'-linked conjugated ubiquitin from proteins. Binds to polyubiquitin chains of different linkage types, including 'Lys-6', 'Lys-11', 'Lys-29', 'Lys-33', 'Lys-48' and 'Lys-63'. May play a regulatory role at the level of protein turnover. The chain is Ubiquitin carboxyl-terminal hydrolase MINDY-2 from Homo sapiens (Human).